The following is a 198-amino-acid chain: MTTILQINSAARSQGAQSTMLADELTAKLQQGNPGATVKVRSLLADALPHLDDAVLGAFFTPAEQRSAEQNAIVAKSDALIDELRSADVIVIGAPMYNFGVSSQLKTYFDWIARAGVTFRYTAQGPEGLLKGKKVYVVSARGGKHVGMPTDSQTPFLTTFLGFIGMTDVTFVYAEGLALGPDAASEALASAREAIAAV.

96 to 99 (MYNF) is an FMN binding site.

It belongs to the azoreductase type 1 family. As to quaternary structure, homodimer. FMN is required as a cofactor.

It carries out the reaction 2 a quinone + NADH + H(+) = 2 a 1,4-benzosemiquinone + NAD(+). The catalysed reaction is N,N-dimethyl-1,4-phenylenediamine + anthranilate + 2 NAD(+) = 2-(4-dimethylaminophenyl)diazenylbenzoate + 2 NADH + 2 H(+). Quinone reductase that provides resistance to thiol-specific stress caused by electrophilic quinones. In terms of biological role, also exhibits azoreductase activity. Catalyzes the reductive cleavage of the azo bond in aromatic azo compounds to the corresponding amines. The chain is FMN-dependent NADH:quinone oxidoreductase from Burkholderia thailandensis (strain ATCC 700388 / DSM 13276 / CCUG 48851 / CIP 106301 / E264).